The sequence spans 183 residues: Peptidyl-prolyl cis-trans isomerase 11 (183 aa).

A PPIase cyclophilin-type domain is found at 20 to 182 (FLEVTAGGAP…LPIVVVQCGQ (163 aa)).

Belongs to the cyclophilin-type PPIase family. PPIase H subfamily.

It catalyses the reaction [protein]-peptidylproline (omega=180) = [protein]-peptidylproline (omega=0). Its function is as follows. PPIases accelerate the folding of proteins. It catalyzes the cis-trans isomerization of proline imidic peptide bonds in oligopeptides. The protein is Peptidyl-prolyl cis-trans isomerase 11 (cyn-11) of Caenorhabditis elegans.